The following is a 1239-amino-acid chain: Erythroid differentiation-related factor 1 (1239 aa).

4 disordered regions span residues 1-39 (MGDPKEAGAEASPSGAAARGGLSLLSQADSEEPSAQGSA), 219-269 (AQPV…REPL), 517-559 (PKKE…DPAD), and 620-646 (KKESDLPAADPSTPIPLKYEDESTRGG). 2 stretches are compositionally biased toward low complexity: residues 9-28 (AEASPSGAAARGGLSLLSQA) and 253-263 (SSVSEDPSASS). The span at 530–547 (NSDESYSEEEEEMADSDE) shows a compositional bias: acidic residues. 2 TPR repeats span residues 693–726 (SKAYYILSDAAMSLQKYGRALRYIKLALQSHDTY) and 914–953 (AQAHCGAEDEFKREFSPEEGLYYSKAVDYYLKALRSLGTR).

It is found in the nucleus. Transcription factor involved in erythroid differentiation. Involved in transcriptional activation of the globin gene. In Mus musculus (Mouse), this protein is Erythroid differentiation-related factor 1 (Edrf1).